A 163-amino-acid chain; its full sequence is Neurotrophin-3 (163 aa).

An N-terminal signal peptide occupies residues 1–3; sequence IQS. The propeptide occupies 4-119; sequence TSMDQGILTE…VLNRTSRRKR (116 aa). Asn112 is a glycosylation site (N-linked (GlcNAc...) asparagine).

The protein belongs to the NGF-beta family.

The protein localises to the secreted. In terms of biological role, seems to promote the survival of visceral and proprioceptive sensory neurons. This Eryx conicus (Rough-scaled sand boa) protein is Neurotrophin-3 (NTF3).